The sequence spans 94 residues: Co-chaperonin GroES (94 aa).

This sequence belongs to the GroES chaperonin family. In terms of assembly, heptamer of 7 subunits arranged in a ring. Interacts with the chaperonin GroEL.

The protein resides in the cytoplasm. Its function is as follows. Together with the chaperonin GroEL, plays an essential role in assisting protein folding. The GroEL-GroES system forms a nano-cage that allows encapsulation of the non-native substrate proteins and provides a physical environment optimized to promote and accelerate protein folding. GroES binds to the apical surface of the GroEL ring, thereby capping the opening of the GroEL channel. The chain is Co-chaperonin GroES from Exiguobacterium sibiricum (strain DSM 17290 / CCUG 55495 / CIP 109462 / JCM 13490 / 255-15).